We begin with the raw amino-acid sequence, 600 residues long: DNA mismatch repair protein MutL (600 aa).

This sequence belongs to the DNA mismatch repair MutL/HexB family.

This protein is involved in the repair of mismatches in DNA. It is required for dam-dependent methyl-directed DNA mismatch repair. May act as a 'molecular matchmaker', a protein that promotes the formation of a stable complex between two or more DNA-binding proteins in an ATP-dependent manner without itself being part of a final effector complex. In Sinorhizobium fredii (strain NBRC 101917 / NGR234), this protein is DNA mismatch repair protein MutL.